The following is a 227-amino-acid chain: Cytochrome c oxidase subunit 2 (227 aa).

The Mitochondrial intermembrane portion of the chain corresponds to Met1–Ser14. The chain crosses the membrane as a helical span at residues Pro15 to Met45. Over Leu46–Gln59 the chain is Mitochondrial matrix. Residues Glu60–Met87 traverse the membrane as a helical segment. Topologically, residues Asp88 to Thr227 are mitochondrial intermembrane. Cu cation is bound by residues His161, Cys196, Glu198, Cys200, His204, and Met207. Residue Glu198 participates in Mg(2+) binding. Tyr218 is subject to Phosphotyrosine.

This sequence belongs to the cytochrome c oxidase subunit 2 family. As to quaternary structure, component of the cytochrome c oxidase (complex IV, CIV), a multisubunit enzyme composed of 14 subunits. The complex is composed of a catalytic core of 3 subunits MT-CO1, MT-CO2 and MT-CO3, encoded in the mitochondrial DNA, and 11 supernumerary subunits COX4I, COX5A, COX5B, COX6A, COX6B, COX6C, COX7A, COX7B, COX7C, COX8 and NDUFA4, which are encoded in the nuclear genome. The complex exists as a monomer or a dimer and forms supercomplexes (SCs) in the inner mitochondrial membrane with NADH-ubiquinone oxidoreductase (complex I, CI) and ubiquinol-cytochrome c oxidoreductase (cytochrome b-c1 complex, complex III, CIII), resulting in different assemblies (supercomplex SCI(1)III(2)IV(1) and megacomplex MCI(2)III(2)IV(2)). Found in a complex with TMEM177, COA6, COX18, COX20, SCO1 and SCO2. Interacts with TMEM177 in a COX20-dependent manner. Interacts with COX20. Interacts with COX16. It depends on Cu cation as a cofactor.

It localises to the mitochondrion inner membrane. The catalysed reaction is 4 Fe(II)-[cytochrome c] + O2 + 8 H(+)(in) = 4 Fe(III)-[cytochrome c] + 2 H2O + 4 H(+)(out). Component of the cytochrome c oxidase, the last enzyme in the mitochondrial electron transport chain which drives oxidative phosphorylation. The respiratory chain contains 3 multisubunit complexes succinate dehydrogenase (complex II, CII), ubiquinol-cytochrome c oxidoreductase (cytochrome b-c1 complex, complex III, CIII) and cytochrome c oxidase (complex IV, CIV), that cooperate to transfer electrons derived from NADH and succinate to molecular oxygen, creating an electrochemical gradient over the inner membrane that drives transmembrane transport and the ATP synthase. Cytochrome c oxidase is the component of the respiratory chain that catalyzes the reduction of oxygen to water. Electrons originating from reduced cytochrome c in the intermembrane space (IMS) are transferred via the dinuclear copper A center (CU(A)) of subunit 2 and heme A of subunit 1 to the active site in subunit 1, a binuclear center (BNC) formed by heme A3 and copper B (CU(B)). The BNC reduces molecular oxygen to 2 water molecules using 4 electrons from cytochrome c in the IMS and 4 protons from the mitochondrial matrix. This Carlito syrichta (Philippine tarsier) protein is Cytochrome c oxidase subunit 2 (MT-CO2).